The primary structure comprises 243 residues: Geranylgeranylglyceryl phosphate synthase (243 aa).

Mg(2+)-binding residues include Asp-22 and Ser-51. Residues 170 to 176 (YLESGSG), 201 to 202 (GG), and 223 to 224 (GT) each bind sn-glycerol 1-phosphate.

This sequence belongs to the GGGP/HepGP synthase family. Group II subfamily. Mg(2+) serves as cofactor.

It localises to the cytoplasm. It catalyses the reaction sn-glycerol 1-phosphate + (2E,6E,10E)-geranylgeranyl diphosphate = sn-3-O-(geranylgeranyl)glycerol 1-phosphate + diphosphate. It functions in the pathway membrane lipid metabolism; glycerophospholipid metabolism. Its function is as follows. Prenyltransferase that catalyzes the transfer of the geranylgeranyl moiety of geranylgeranyl diphosphate (GGPP) to the C3 hydroxyl of sn-glycerol-1-phosphate (G1P). This reaction is the first ether-bond-formation step in the biosynthesis of archaeal membrane lipids. The sequence is that of Geranylgeranylglyceryl phosphate synthase from Picrophilus torridus (strain ATCC 700027 / DSM 9790 / JCM 10055 / NBRC 100828 / KAW 2/3).